The primary structure comprises 463 residues: Chaperone SurA (463 aa).

The first 25 residues, 1 to 25, serve as a signal peptide directing secretion; the sequence is MTRYFSIVLSLLLAVSCVFLPVASA. PpiC domains are found at residues 175-277 and 291-390; these read GAQY…KLVE and ATEY…QRLG. The segment at 439–463 is disordered; sequence ADDHHTPSAAVTPATGAVLPAATKH.

It is found in the periplasm. It catalyses the reaction [protein]-peptidylproline (omega=180) = [protein]-peptidylproline (omega=0). Functionally, chaperone involved in the correct folding and assembly of outer membrane proteins. Recognizes specific patterns of aromatic residues and the orientation of their side chains, which are found more frequently in integral outer membrane proteins. May act in both early periplasmic and late outer membrane-associated steps of protein maturation. This Xylella fastidiosa (strain Temecula1 / ATCC 700964) protein is Chaperone SurA.